Consider the following 175-residue polypeptide: Alpha-crystallin B chain (175 aa).

An N-acetylmethionine modification is found at methionine 1. Residue serine 19 is modified to Phosphoserine. Serine 41 carries O-linked (GlcNAc) serine glycosylation. A phosphoserine mark is found at serine 45 and serine 59. The sHSP domain maps to 56–164; sequence RAPSWIDTGL…PERTIPITRE (109 aa). Histidine 83 is a binding site for Zn(2+). N-linked (Glc) (glycation) lysine glycosylation is present at lysine 90. At lysine 92 the chain carries N6-acetyllysine; alternate. A glycan (N-linked (Glc) (glycation) lysine; alternate) is linked at lysine 92. 4 residues coordinate Zn(2+): histidine 104, glutamate 106, histidine 111, and histidine 119. Residues 144–175 form a disordered region; the sequence is TVNGPRKQASGPERTIPITREEKPAVTAAPKK. Lysine 166 is subject to N6-acetyllysine. O-linked (GlcNAc) threonine glycosylation occurs at threonine 170.

Belongs to the small heat shock protein (HSP20) family. Heteromer composed of three CRYAA and one CRYAB subunits. Aggregates with homologous proteins, including the small heat shock protein HSPB1, to form large heteromeric complexes. Inter-subunit bridging via zinc ions enhances stability, which is crucial as there is no protein turn over in the lens. Interacts with HSPBAP1 and TTN/titin. Interacts with TMEM109; in the cellular response to DNA damage. Interacts with DES; binds rapidly during early stages of DES filament assembly and a reduced binding seen in the later stages. Interacts with TMED10; the interaction mediates the translocation from the cytoplasm into the ERGIC (endoplasmic reticulum-Golgi intermediate compartment) and thereby secretion. Interacts with ATP6V1A and with MTOR, forming a ternary complex. In terms of processing, it is not known whether either Lys-90, or Lys-92, or both are glycated. In terms of tissue distribution, lens as well as other tissues.

The protein localises to the cytoplasm. The protein resides in the nucleus. It is found in the secreted. It localises to the lysosome. May contribute to the transparency and refractive index of the lens. Has chaperone-like activity, preventing aggregation of various proteins under a wide range of stress conditions. In lens epithelial cells, stabilizes the ATP6V1A protein, preventing its degradation by the proteasome. The sequence is that of Alpha-crystallin B chain (CRYAB) from Bos taurus (Bovine).